The sequence spans 306 residues: LysM and putative peptidoglycan-binding domain-containing protein 3 (306 aa).

The Extracellular segment spans residues 1-217 (MAGRHQNRSF…PYYGADWGIG (217 aa)). N7 carries an N-linked (GlcNAc...) asparagine glycan. At S55 the chain carries Phosphoserine. Positions 65–109 (LTKDIQEGDTLNAIALQYCCTVADIKRVNNLISDQDFFALRSIKI) constitute a LysM domain. A helical transmembrane segment spans residues 218–238 (WWTAVVIMLIVGIITPVFYLL). At 239-306 (YYEILAKVDV…SQSPAAQQET (68 aa)) the chain is on the cytoplasmic side.

The protein localises to the cell membrane. It localises to the golgi apparatus. In terms of biological role, essential for Golgi structural integrity. This Homo sapiens (Human) protein is LysM and putative peptidoglycan-binding domain-containing protein 3 (LYSMD3).